Here is a 511-residue protein sequence, read N- to C-terminus: Cytochrome P450 4A7 (511 aa).

The propeptide occupies 1–4 (MSVS). Glutamate 322 and cysteine 458 together coordinate heme.

The protein belongs to the cytochrome P450 family. It depends on heme as a cofactor. In terms of tissue distribution, liver, kidney, small intestine.

It is found in the endoplasmic reticulum membrane. It localises to the microsome membrane. It carries out the reaction an omega-methyl-long-chain fatty acid + reduced [NADPH--hemoprotein reductase] + O2 = an omega-hydroxy-long-chain fatty acid + oxidized [NADPH--hemoprotein reductase] + H2O + H(+). Its function is as follows. Cytochromes P450 are a group of heme-thiolate monooxygenases. In liver microsomes, this enzyme is involved in an NADPH-dependent electron transport pathway. It oxidizes a variety of structurally unrelated compounds, including steroids, fatty acids, and xenobiotics. Functionally, the kidney P-450 system is rather specialized for the omega-hydroxylation of fatty acids. Both P450-KA1 and P450-KA2 catalyze the omega- and (omega-1)-hydroxylation of various fatty acids with no drug-metabolizing activity, and hydroxylate prostaglandin A1 and A2 solely at the omega-position. In Oryctolagus cuniculus (Rabbit), this protein is Cytochrome P450 4A7 (CYP4A7).